We begin with the raw amino-acid sequence, 684 residues long: Probable potassium transport system protein Kup (684 aa).

The next 12 membrane-spanning stretches (helical) occupy residues 19 to 39 (ALLV…LYVM), 61 to 81 (VSLI…LIAL), 104 to 124 (WLVL…MLTP), 151 to 171 (QVIW…RFGT), 177 to 197 (AFGP…FIAL), 223 to 243 (MGLF…ALYS), 255 to 275 (LSWP…AVWL), 303 to 323 (LGAI…LISG), 352 to 372 (LYIP…IGYF), 381 to 401 (AYGL…YQYL), 407 to 427 (PAVV…VFFI), and 433 to 453 (FLHG…VMYV).

Belongs to the HAK/KUP transporter (TC 2.A.72) family.

Its subcellular location is the cell membrane. The catalysed reaction is K(+)(in) + H(+)(in) = K(+)(out) + H(+)(out). In terms of biological role, transport of potassium into the cell. Likely operates as a K(+):H(+) symporter. The protein is Probable potassium transport system protein Kup of Lacticaseibacillus paracasei (strain ATCC 334 / BCRC 17002 / CCUG 31169 / CIP 107868 / KCTC 3260 / NRRL B-441) (Lactobacillus paracasei).